Consider the following 488-residue polypeptide: 3-octaprenyl-4-hydroxybenzoate carboxy-lyase (488 aa).

N172 contributes to the Mn(2+) binding site. Prenylated FMN is bound by residues 175 to 177, 189 to 191, and 194 to 195; these read IYR, RWL, and RG. Mn(2+) is bound at residue E238. Residue D287 is the Proton donor of the active site.

The protein belongs to the UbiD family. Homohexamer. The cofactor is prenylated FMN. Mn(2+) serves as cofactor.

It localises to the cell membrane. It carries out the reaction a 4-hydroxy-3-(all-trans-polyprenyl)benzoate + H(+) = a 2-(all-trans-polyprenyl)phenol + CO2. It participates in cofactor biosynthesis; ubiquinone biosynthesis. Functionally, catalyzes the decarboxylation of 3-octaprenyl-4-hydroxy benzoate to 2-octaprenylphenol, an intermediate step in ubiquinone biosynthesis. The polypeptide is 3-octaprenyl-4-hydroxybenzoate carboxy-lyase (Halorhodospira halophila (strain DSM 244 / SL1) (Ectothiorhodospira halophila (strain DSM 244 / SL1))).